A 496-amino-acid polypeptide reads, in one-letter code: NAD(P)H-quinone oxidoreductase subunit 2, chloroplastic (496 aa).

Helical transmembrane passes span 14 to 34, 42 to 62, 79 to 99, 109 to 129, 133 to 153, 167 to 187, 210 to 230, 244 to 264, 281 to 301, 305 to 325, 334 to 354, 377 to 397, 400 to 420, and 469 to 489; these read SFLPEGILIFNIIFILILDLV, MLVKISFIGLLLSMLTLIQQW, FTTCFRLIISLCCILCIPLSF, LTEFIIFLLFTTLGAMILSSA, ITIFISLECLGLGSYLLTGYV, LIIGGTSSSIFAYGLSWLYGL, LASWFAYICIIVGIGFKLSLV, PTPVVAFLSIISKAGALALTI, ILQILAILSMIVGNLLAMVET, RILTYSSIAQAGYLLIGIVAG, LVYMIFYLFMNIGAFSCIILF, ASCLSLCLLSLAGIPPLTGFF, ILLFWSAWQSGFYFLVMTGIF, and IYLCTFISGFVGIFMNPVIYF.

This sequence belongs to the complex I subunit 2 family. As to quaternary structure, NDH is composed of at least 16 different subunits, 5 of which are encoded in the nucleus.

The protein resides in the plastid. It is found in the chloroplast thylakoid membrane. It catalyses the reaction a plastoquinone + NADH + (n+1) H(+)(in) = a plastoquinol + NAD(+) + n H(+)(out). The catalysed reaction is a plastoquinone + NADPH + (n+1) H(+)(in) = a plastoquinol + NADP(+) + n H(+)(out). Its function is as follows. NDH shuttles electrons from NAD(P)H:plastoquinone, via FMN and iron-sulfur (Fe-S) centers, to quinones in the photosynthetic chain and possibly in a chloroplast respiratory chain. The immediate electron acceptor for the enzyme in this species is believed to be plastoquinone. Couples the redox reaction to proton translocation, and thus conserves the redox energy in a proton gradient. The sequence is that of NAD(P)H-quinone oxidoreductase subunit 2, chloroplastic from Chara vulgaris (Common stonewort).